The following is a 332-amino-acid chain: Adenine deaminase (332 aa).

Residues histidine 16, histidine 18, and histidine 196 each contribute to the Zn(2+) site. The active-site Proton donor is the glutamate 199. Aspartate 277 serves as a coordination point for Zn(2+). Aspartate 278 provides a ligand contact to substrate.

Belongs to the metallo-dependent hydrolases superfamily. Adenosine and AMP deaminases family. Adenine deaminase type 2 subfamily. Zn(2+) serves as cofactor.

The enzyme catalyses adenine + H2O + H(+) = hypoxanthine + NH4(+). Functionally, catalyzes the hydrolytic deamination of adenine to hypoxanthine. Plays an important role in the purine salvage pathway and in nitrogen catabolism. The chain is Adenine deaminase from Acinetobacter baylyi (strain ATCC 33305 / BD413 / ADP1).